Consider the following 311-residue polypeptide: Malate dehydrogenase (311 aa).

NAD(+) contacts are provided by residues 7–13 and D34; that span reads GAAGGIG. Substrate-binding residues include R81 and R87. Residues N94 and 117 to 119 each bind NAD(+); that span reads ITN. Positions 119 and 153 each coordinate substrate. The active-site Proton acceptor is H177. An NAD(+)-binding site is contributed by M227.

It belongs to the LDH/MDH superfamily. MDH type 1 family. Homodimer.

It catalyses the reaction (S)-malate + NAD(+) = oxaloacetate + NADH + H(+). In terms of biological role, catalyzes the reversible oxidation of malate to oxaloacetate. This Shewanella pealeana (strain ATCC 700345 / ANG-SQ1) protein is Malate dehydrogenase.